A 366-amino-acid chain; its full sequence is Beta sliding clamp (366 aa).

It belongs to the beta sliding clamp family. As to quaternary structure, forms a ring-shaped head-to-tail homodimer around DNA which binds and tethers DNA polymerases and other proteins to the DNA. The DNA replisome complex has a single clamp-loading complex (3 tau and 1 each of delta, delta', psi and chi subunits) which binds 3 Pol III cores (1 core on the leading strand and 2 on the lagging strand) each with a beta sliding clamp dimer. Additional proteins in the replisome are other copies of gamma, psi and chi, Ssb, DNA helicase and RNA primase.

The protein resides in the cytoplasm. Its function is as follows. Confers DNA tethering and processivity to DNA polymerases and other proteins. Acts as a clamp, forming a ring around DNA (a reaction catalyzed by the clamp-loading complex) which diffuses in an ATP-independent manner freely and bidirectionally along dsDNA. Initially characterized for its ability to contact the catalytic subunit of DNA polymerase III (Pol III), a complex, multichain enzyme responsible for most of the replicative synthesis in bacteria; Pol III exhibits 3'-5' exonuclease proofreading activity. The beta chain is required for initiation of replication as well as for processivity of DNA replication. This chain is Beta sliding clamp (dnaN), found in Chlamydia muridarum (strain MoPn / Nigg).